The sequence spans 332 residues: D-glutamate N-acetyltransferase (332 aa).

This sequence belongs to the N-acetyltransferase DgcN family.

The enzyme catalyses D-glutamate + acetyl-CoA = N-acetyl-D-glutamate + CoA + H(+). It carries out the reaction D-aspartate + acetyl-CoA = N-acetyl-D-aspartate + CoA + H(+). The catalysed reaction is D-glutamine + acetyl-CoA = N-acetyl-D-glutamine + CoA + H(+). It functions in the pathway amino-acid degradation. Functionally, N-acetyltransferase involved in a deamination-independent D-glutamate degradation pathway, named the DgcN-DgcA pathway. Catalyzes the transfer of the acetyl moiety from acetyl-CoA to D-glutamate to generate N-acetyl-D-glutamate. Can also acetylate D-aspartate and D-glutamine, with lower efficiency. Has low activity with D-asparagine. Cannot use succinyl-CoA. The protein is D-glutamate N-acetyltransferase of Pseudoalteromonas sp.